Here is a 565-residue protein sequence, read N- to C-terminus: Periplasmic trehalase (565 aa).

A signal peptide spans 1-30; it reads MKSPAPSRPQKMALIPACIFLCFAALSVQA. Substrate is bound by residues Arg-152, 159–160, Asn-196, 205–207, 277–279, and Gly-310; these read WD, RSQ, and RPE. Catalysis depends on proton donor/acceptor residues Asp-312 and Glu-496. Glu-511 contacts substrate. Residues 538–565 form a disordered region; sequence PCDNVPATRPTVKSATTQPSTKEAQPTP. Polar residues predominate over residues 548–565; that stretch reads TVKSATTQPSTKEAQPTP.

Belongs to the glycosyl hydrolase 37 family. Monomer.

The protein localises to the periplasm. The catalysed reaction is alpha,alpha-trehalose + H2O = alpha-D-glucose + beta-D-glucose. Its function is as follows. Provides the cells with the ability to utilize trehalose at high osmolarity by splitting it into glucose molecules that can subsequently be taken up by the phosphotransferase-mediated uptake system. This is Periplasmic trehalase from Escherichia coli (strain 55989 / EAEC).